A 549-amino-acid chain; its full sequence is Fumarate hydratase 1, mitochondrial (549 aa).

[4Fe-4S] cluster is bound at residue cysteine 114. Residues 115–116 (QD), arginine 154, glycine 197, and 200–206 (NKSFLLQ) contribute to the (S)-malate site. Residues cysteine 233 and cysteine 328 each coordinate [4Fe-4S] cluster. (S)-malate-binding positions include arginine 404, 450-454 (TTAGR), and lysine 474.

This sequence belongs to the class-I fumarase family. Homodimer. [4Fe-4S] cluster is required as a cofactor.

It is found in the mitochondrion. It catalyses the reaction (S)-malate = fumarate + H2O. It participates in carbohydrate metabolism; tricarboxylic acid cycle; (S)-malate from fumarate: step 1/1. Specifically and competitively inhibited by 2-thiomalate, which coordinates with the catalytic [4Fe-4S] cluster. Catalyzes the reversible hydration of fumarate to (S)-malate. Catalyzes the hydration of fumarate to L-malate in the tricarboxylic acid (TCA) cycle to facilitate a transition step in the production of energy in the form of NADH. In Leishmania major, this protein is Fumarate hydratase 1, mitochondrial.